The primary structure comprises 276 residues: Rhomboid protease GlpG (276 aa).

A run of 6 helical transmembrane segments spans residues 94 to 114 (GPVT…MQIL), 142 to 162 (ALMH…WYLG), 169 to 189 (LGSG…GYVQ), 192 to 212 (FSGP…GYVW), 229 to 249 (LIIF…GMSM), and 250 to 270 (ANGA…VDSL). The active-site Nucleophile is S201. The active site involves H254.

It belongs to the peptidase S54 family.

The protein localises to the cell inner membrane. The catalysed reaction is Cleaves type-1 transmembrane domains using a catalytic dyad composed of serine and histidine that are contributed by different transmembrane domains.. Functionally, rhomboid-type serine protease that catalyzes intramembrane proteolysis. This is Rhomboid protease GlpG from Escherichia coli O45:K1 (strain S88 / ExPEC).